We begin with the raw amino-acid sequence, 365 residues long: Baculoviral IAP repeat-containing protein 7 (365 aa).

BIR repeat units follow at residues 7 to 73 (RQRS…PFLQ) and 115 to 180 (RLGS…DFLL). Zn(2+) contacts are provided by cysteine 149, cysteine 152, histidine 169, and cysteine 176. The tract at residues 186 to 234 (AFIRSVQESFFSSPETSPESVGSYEGSPVSSPGSPPVCPFLSTSVAQGA) is self-inhibits the anti-apoptotic function. Phosphoserine is present on serine 198. Serine 202 is subject to Phosphoserine; by MAPK1. Serine 212 carries the phosphoserine modification. Residues serine 216 and serine 219 each carry the phosphoserine; by MAPK1 modification. The tract at residues 278 to 306 (TESVSVPRAPTQRERPEPPKEPAPPLSTE) is disordered. A compositionally biased stretch (basic and acidic residues) spans 288–297 (TQRERPEPPK). The RING-type zinc-finger motif lies at 318–353 (CKVCMDNDVSMVFVPCGHLVVCTECAPNLRHCPICR).

Belongs to the IAP family. Post-translationally, auto-ubiquitinated, and degraded in a 2-step mechanism; a caspase-independent first step and a caspase-dependent second step. In terms of processing, phosphorylated via MAPK-dependent and CDK-dependent pathways during oocyte maturation. Phosphorylation does not appear to affect caspase inhibition or autoubiquitination activity.

It localises to the cytoplasm. The enzyme catalyses S-ubiquitinyl-[E2 ubiquitin-conjugating enzyme]-L-cysteine + [acceptor protein]-L-lysine = [E2 ubiquitin-conjugating enzyme]-L-cysteine + N(6)-ubiquitinyl-[acceptor protein]-L-lysine.. Its function is as follows. Weak apoptotic suppressor. Has E3 ubiquitin-protein ligase activity. Weak inhibitor of caspase activity. In Xenopus tropicalis (Western clawed frog), this protein is Baculoviral IAP repeat-containing protein 7 (birc7).